The chain runs to 447 residues: ATP-dependent protease ATPase subunit HslU (447 aa).

ATP-binding positions include isoleucine 18, 60 to 65 (GVGKTE), aspartate 259, glutamate 325, and arginine 397.

The protein belongs to the ClpX chaperone family. HslU subfamily. In terms of assembly, a double ring-shaped homohexamer of HslV is capped on each side by a ring-shaped HslU homohexamer. The assembly of the HslU/HslV complex is dependent on binding of ATP.

The protein localises to the cytoplasm. Its function is as follows. ATPase subunit of a proteasome-like degradation complex; this subunit has chaperone activity. The binding of ATP and its subsequent hydrolysis by HslU are essential for unfolding of protein substrates subsequently hydrolyzed by HslV. HslU recognizes the N-terminal part of its protein substrates and unfolds these before they are guided to HslV for hydrolysis. This Burkholderia cenocepacia (strain HI2424) protein is ATP-dependent protease ATPase subunit HslU.